Consider the following 568-residue polypeptide: Sphingosine-1-phosphate lyase 1 (568 aa).

Residues 1–41 (MPSTDLLKLKDFEPYLEILEAYSTKAKNYVNGYCTKYEPWQ) lie on the Lumenal side of the membrane. A helical; Signal-anchor for type III membrane protein transmembrane segment spans residues 42-62 (LIAGSVLCTLLVVWVYELIFQ). Residues 63-568 (PESLWSRFKN…NQMNGSPKPR (506 aa)) lie on the Cytoplasmic side of the membrane. Lys-353 carries the N6-(pyridoxal phosphate)lysine; alternate modification. An N6-acetyllysine; alternate modification is found at Lys-353. 2 positions are modified to 3'-nitrotyrosine: Tyr-356 and Tyr-366. Position 564 is a phosphoserine (Ser-564).

The protein belongs to the group II decarboxylase family. Sphingosine-1-phosphate lyase subfamily. As to quaternary structure, homodimer. Requires pyridoxal 5'-phosphate as cofactor.

It localises to the endoplasmic reticulum membrane. It carries out the reaction sphinganine 1-phosphate = hexadecanal + phosphoethanolamine. The catalysed reaction is sphing-4-enine 1-phosphate = (2E)-hexadecenal + phosphoethanolamine. It functions in the pathway lipid metabolism; sphingolipid metabolism. Its function is as follows. Cleaves phosphorylated sphingoid bases (PSBs), such as sphingosine-1-phosphate, into fatty aldehydes and phosphoethanolamine. Elevates stress-induced ceramide production and apoptosis. Required for global lipid homeostasis in liver and cholesterol homeostasis in fibroblasts. Involved in the regulation of pro-inflammatory response and neutrophil trafficking. Modulates neuronal autophagy via phosphoethanolamine production which regulates accumulation of aggregate-prone proteins such as APP. Seems to play a role in establishing neuronal contact sites and axonal maintenance. This chain is Sphingosine-1-phosphate lyase 1, found in Rattus norvegicus (Rat).